Reading from the N-terminus, the 637-residue chain is MSELAASLLSRVILPRPGEPLDVRKLYLEESTTNARRAHAPTRTSLQIGAESEVSFATYFNAFPASYWRRWTTCKSVVLRVQVTGAGRVDVYRTKATGARIFVEGHDFTGTEDQPAAVETEVVLQPFEDGGWVWFDITTDTAVTLHSGGWYATSPAPGTANIAVGIPTFNRPADCVNALRELTADPLVDQVIGAVIVPDQGERKVRDHPDFPAAAARLGSRLSIHDQPNLGGSGGYSRVMYEALKNTDCQQILFMDDDIRLEPDSILRVLAMHRFAKAPMLVGGQMLNLQEPSHLHIMGEVVDRSIFMWTAAPHAEYDHDFAEYPLNDNNSRSKLLHRRIDVDYNGWWTCMIPRQVAEELGQPLPLFIKWDDADYGLRAAEHGYPTVTLPGAAIWHMAWSDKDDAIDWQAYFHLRNRLVVAAMHWDGPKAQVIGLVRSHLKATLKHLACLEYSTVAIQNKAIDDFLAGPEHIFSILESALPQVHRIRKSYPDAVVLPAASELPPPLHKNKAMKPPVNPLVIGYRLARGIMHNLTAANPQHHRRPEFNVPTQDARWFLLCTVDGATVTTADGCGVVYRQRDRAKMFALLWQSLRRQRQLLKRFEEMRRIYRDALPTLSSKQKWETALLPAANQEPEHG.

4 residues coordinate UDP-alpha-D-galactofuranose: R171, Q200, N229, and D256. Residues D256 and D258 each contribute to the Mn(2+) site. The Proton acceptor role is filled by D372. H396 contributes to the Mn(2+) binding site.

This sequence belongs to the glycosyltransferase 2 family. As to quaternary structure, homotetramer. Mn(2+) is required as a cofactor. Requires Mg(2+) as cofactor.

It localises to the cell membrane. The enzyme catalyses beta-D-galactofuranosyl-(1-&gt;5)-beta-D-galactofuranosyl-(1-&gt;4)-alpha-L-rhamnosyl-(1-&gt;3)-N-acetyl-alpha-D-glucosaminyl-diphospho-trans,octa-cis-decaprenol + 28 UDP-alpha-D-galactofuranose = [beta-D-galactofuranosyl-(1-&gt;5)-beta-D-galactofuranosyl-(1-&gt;6)]14-beta-D-galactofuranosyl-(1-&gt;5)-beta-D-galactofuranosyl-(1-&gt;4)-alpha-L-rhamnopyranosyl-(1-&gt;3)-N-acetyl-alpha-D-glucosaminyl-diphospho-trans,octa-cis-decaprenol + 28 UDP + 28 H(+). It participates in cell wall biogenesis; cell wall polysaccharide biosynthesis. Functionally, involved in the galactan polymerization of the arabinogalactan (AG) region of the mycolylarabinogalactan-peptidoglycan (mAGP) complex, an essential component of the mycobacteria cell wall. Thus, successively transfers approximately 28 galactofuranosyl (Galf) residues from UDP-galactofuranose (UDP-Galf) onto the galactofuranosyl-galactofuranosyl-rhamnosyl-GlcNAc-diphospho-decaprenol (Galf-Galf-Rha-GlcNAc-PP-C50) acceptor produced by GlfT1, with alternating 1-&gt;5 and 1-&gt;6 links, forming a galactan domain with approximately 30 galactofuranosyl residues. In Mycobacterium tuberculosis (strain ATCC 25618 / H37Rv), this protein is Galactofuranosyltransferase GlfT2.